A 269-amino-acid chain; its full sequence is Signal recognition particle receptor subunit beta (269 aa).

The helical transmembrane segment at 35 to 55 (LLSVAVALLAVLLTLVFWKFI) threads the bilayer. GTP-binding positions include 69–77 (GLCDSGKTL) and 90–93 (TQTS). Ser-110 bears the Phosphoserine mark. Residues Gly-118 and 178-181 (NKQD) each bind GTP. Position 212 is a phosphothreonine (Thr-212). Residue Ala-246 coordinates GTP.

Belongs to the SRP receptor beta subunit family. Heterodimer with SRPRA.

It localises to the endoplasmic reticulum membrane. Functionally, component of the SRP (signal recognition particle) receptor. Ensures, in conjunction with the signal recognition particle, the correct targeting of the nascent secretory proteins to the endoplasmic reticulum membrane system. May mediate the membrane association of SR. In Mus musculus (Mouse), this protein is Signal recognition particle receptor subunit beta (Srprb).